Consider the following 349-residue polypeptide: Probable ethanolamine kinase (349 aa).

The protein belongs to the choline/ethanolamine kinase family.

It is found in the cytoplasm. It catalyses the reaction ethanolamine + ATP = phosphoethanolamine + ADP + H(+). It participates in phospholipid metabolism; phosphatidylethanolamine biosynthesis; phosphatidylethanolamine from ethanolamine: step 1/3. Functionally, highly specific for ethanolamine phosphorylation. May be a rate-controlling step in phosphatidylethanolamine biosynthesis. This is Probable ethanolamine kinase (etnk) from Nematostella vectensis (Starlet sea anemone).